The chain runs to 506 residues: Ent-kaurenoic acid oxidase (506 aa).

Residues 11-31 (AWAAGDLWVLAAAVVAGVVLV) form a helical membrane-spanning segment. Residue cysteine 451 coordinates heme.

It belongs to the cytochrome P450 family. The cofactor is heme. Expressed in roots and panicles. Expressed at low levels in vegetative shoot apices, leaf sheaths, leaf blades and stems.

It is found in the endoplasmic reticulum membrane. It carries out the reaction ent-kaur-16-en-19-oate + 3 reduced [NADPH--hemoprotein reductase] + 3 O2 = gibberellin A12 + 3 oxidized [NADPH--hemoprotein reductase] + 4 H2O + 4 H(+). It catalyses the reaction ent-kaur-16-en-19-oate + reduced [NADPH--hemoprotein reductase] + O2 = ent-7alpha-hydroxykaur-16-en-19-oate + oxidized [NADPH--hemoprotein reductase] + H2O + H(+). The catalysed reaction is ent-7alpha-hydroxykaur-16-en-19-oate + reduced [NADPH--hemoprotein reductase] + O2 = gibberellin A12 aldehyde + oxidized [NADPH--hemoprotein reductase] + 2 H2O + H(+). The enzyme catalyses gibberellin A12 aldehyde + reduced [NADPH--hemoprotein reductase] + O2 = gibberellin A12 + oxidized [NADPH--hemoprotein reductase] + H2O + 2 H(+). It functions in the pathway plant hormone biosynthesis; gibberellin biosynthesis. Its function is as follows. Involved in gibberellin (GA) biosynthesis. Catalyzes three successive oxidations of ent-kaurenoic acid giving gibberellin 12 (GA12), a key step in GAs biosynthesis. GAs, which are involved many processes, including stem elongation, play a central role in plant development. Required for pollen germination and elongation. This chain is Ent-kaurenoic acid oxidase, found in Oryza sativa subsp. japonica (Rice).